The primary structure comprises 349 residues: Glycerol-3-phosphate dehydrogenase [NAD(P)+] (349 aa).

Positions 12, 13, and 107 each coordinate NADPH. Residues lysine 107, glycine 138, and serine 140 each contribute to the sn-glycerol 3-phosphate site. NADPH is bound at residue alanine 142. The sn-glycerol 3-phosphate site is built by lysine 193, aspartate 246, serine 256, arginine 257, and asparagine 258. Lysine 193 (proton acceptor) is an active-site residue. Position 257 (arginine 257) interacts with NADPH. 2 residues coordinate NADPH: valine 281 and glutamate 283.

The protein belongs to the NAD-dependent glycerol-3-phosphate dehydrogenase family.

The protein localises to the cytoplasm. It carries out the reaction sn-glycerol 3-phosphate + NAD(+) = dihydroxyacetone phosphate + NADH + H(+). It catalyses the reaction sn-glycerol 3-phosphate + NADP(+) = dihydroxyacetone phosphate + NADPH + H(+). It functions in the pathway membrane lipid metabolism; glycerophospholipid metabolism. Its function is as follows. Catalyzes the reduction of the glycolytic intermediate dihydroxyacetone phosphate (DHAP) to sn-glycerol 3-phosphate (G3P), the key precursor for phospholipid synthesis. This Pelotomaculum thermopropionicum (strain DSM 13744 / JCM 10971 / SI) protein is Glycerol-3-phosphate dehydrogenase [NAD(P)+].